We begin with the raw amino-acid sequence, 176 residues long: Ribosome rescue factor SmrB (176 aa).

The Smr domain maps to 93 to 168 (LDLHGYRQSE…GDAALLVLID (76 aa)).

This sequence belongs to the SmrB family. Associates with collided ribosomes, but not with correctly translating polysomes.

In terms of biological role, acts as a ribosome collision sensor. Detects stalled/collided disomes (pairs of ribosomes where the leading ribosome is stalled and a second ribosome has collided with it) and endonucleolytically cleaves mRNA at the 5' boundary of the stalled ribosome. Stalled/collided disomes form a new interface (primarily via the 30S subunits) that binds SmrB. Cleaved mRNA becomes available for tmRNA ligation, leading to ribosomal subunit dissociation and rescue of stalled ribosomes. This Shewanella sp. (strain W3-18-1) protein is Ribosome rescue factor SmrB.